The sequence spans 107 residues: L-amino-acid oxidase (107 aa).

FAD is bound at residue glycine 35–arginine 38. The substrate site is built by arginine 38 and histidine 49.

Belongs to the flavin monoamine oxidase family. FIG1 subfamily. Homodimer; non-covalently linked. FAD serves as cofactor. Post-translationally, N-glycosylated. Expressed by the venom gland.

The protein localises to the secreted. The enzyme catalyses an L-alpha-amino acid + O2 + H2O = a 2-oxocarboxylate + H2O2 + NH4(+). It catalyses the reaction L-leucine + O2 + H2O = 4-methyl-2-oxopentanoate + H2O2 + NH4(+). The catalysed reaction is L-phenylalanine + O2 + H2O = 3-phenylpyruvate + H2O2 + NH4(+). It carries out the reaction L-tryptophan + O2 + H2O = indole-3-pyruvate + H2O2 + NH4(+). The enzyme catalyses L-methionine + O2 + H2O = 4-methylsulfanyl-2-oxobutanoate + H2O2 + NH4(+). It catalyses the reaction L-isoleucine + O2 + H2O = (S)-3-methyl-2-oxopentanoate + H2O2 + NH4(+). The catalysed reaction is L-arginine + O2 + H2O = 5-guanidino-2-oxopentanoate + H2O2 + NH4(+). It carries out the reaction L-histidine + O2 + H2O = 3-(imidazol-5-yl)pyruvate + H2O2 + NH4(+). Catalyzes an oxidative deamination of predominantly hydrophobic and aromatic L-amino acids, thus producing hydrogen peroxide that may contribute to the diverse toxic effects of this enzyme. Shows high activity on L-Met, moderate activity on L-Trp, L-Leu, L-His, L-Phe, L-Arg, L-Ile, low activity on L-Val, L-Glu, L-Lys, L-Gln, L-Asn, L-Tyr, L-Ala, and no activity on L-Asp, L-Ser, L-Pro, L-Gly, L-Thr and L-Cys. Shows antimicrobial activity inhibiting the growth of both Gram-negative and Gram-positive bacteria. Also inhibits platelet aggregation induced by ADP or collagen. Effects of snake L-amino oxidases on platelets are controversial, since they either induce aggregation or inhibit agonist-induced aggregation. These different effects are probably due to different experimental conditions. This protein may also induce hemorrhage, hemolysis, edema, apoptosis, and have antiparasitic activities. The chain is L-amino-acid oxidase from Macrovipera lebetinus (Levantine viper).